The sequence spans 158 residues: MQGNLSAWLVKHGIVHRSLGFDYQGIETLQIKPEDWHSIAVILYVYGYNYLRSQCAYDVAPGGLLASVYHLTRIEYSLDQPEEVCIKVFAPRKNPRIPSIFWVWKSADFQERESYDMLGISYDNHPRLKRILMPESWIGWPLRKDYIAPNFYEIQDAH.

This sequence belongs to the complex I 30 kDa subunit family. NDH is composed of at least 16 different subunits, 5 of which are encoded in the nucleus.

Its subcellular location is the plastid. It localises to the chloroplast thylakoid membrane. The enzyme catalyses a plastoquinone + NADH + (n+1) H(+)(in) = a plastoquinol + NAD(+) + n H(+)(out). It carries out the reaction a plastoquinone + NADPH + (n+1) H(+)(in) = a plastoquinol + NADP(+) + n H(+)(out). In terms of biological role, NDH shuttles electrons from NAD(P)H:plastoquinone, via FMN and iron-sulfur (Fe-S) centers, to quinones in the photosynthetic chain and possibly in a chloroplast respiratory chain. The immediate electron acceptor for the enzyme in this species is believed to be plastoquinone. Couples the redox reaction to proton translocation, and thus conserves the redox energy in a proton gradient. This Cicer arietinum (Chickpea) protein is NAD(P)H-quinone oxidoreductase subunit J, chloroplastic.